Consider the following 787-residue polypeptide: Integrin beta-3 (787 aa).

The first 25 residues, 1-25 (MRTRRPGQLWATLLALGALAGVVVG), serve as a signal peptide directing secretion. Residues 27–717 (SNICTTRGVN…EEPECPKGPD (691 aa)) are Extracellular-facing. Positions 29 to 75 (ICTTRGVNSCQQCLAVSPVCAWCSDESLPQNSPRCNLKKNLLKDKCS) constitute a PSI domain. 19 disulfides stabilise this stretch: C30–C48, C38–C460, C41–C63, C51–C74, C202–C209, C257–C298, C399–C411, C431–C458, C462–C482, C473–C485, C487–C496, C498–C528, C511–C526, C520–C531, C533–C546, C548–C569, C553–C567, C561–C572, and C574–C583. The VWFA domain maps to 134 to 376 (DYPVDIYYLM…QLIVDAYGKI (243 aa)). Mg(2+) is bound by residues S146 and S148. Ca(2+)-binding residues include S148, D151, D152, and D183. A CX3CL1-binding region spans residues 202-209 (CYTMKSTC). The segment at 202–209 (CYTMKSTC) is involved in CX3CL1-, NRG1-, FGF1- and IGF1-binding. The Ca(2+) site is built by N240, D242, P244, E245, and D276. Residue E245 coordinates Mg(2+). The interval 292–312 (LPNDGRCHIGPDNHYSASTTM) is CX3CL1-binding. Residues N345 and N396 are each glycosylated (N-linked (GlcNAc...) asparagine). I-EGF domains follow at residues 462-497 (CQAFAQPLSPRCNNGNGTFECGVCRCDQGWLGSMCE), 498-547 (CSEE…KYCE), 548-584 (CDDFSCVRYKGEMCSGHGQCNCGDCVCDSDWTGYYCN), and 585-624 (CTTRTDTCMSTNGLLCSGRGNCECGSCVCVQPGSYGDTCE). N477 carries an N-linked (GlcNAc...) asparagine glycan. An N-linked (GlcNAc...) asparagine glycan is attached at N584. Intrachain disulfides connect C585–C608, C592–C606, C600–C611, C613–C623, C626–C629, C633–C680, C639–C660, C642–C656, and C688–C712. An N-linked (GlcNAc...) asparagine glycan is attached at N679. A helical transmembrane segment spans residues 718-738 (ILVVLLSVMGAILLIGLATLL). Residues 739–787 (IWKLLITIHDRKEFAKFEEERARAKWDTANNPLYKEATSTFTNITYRGT) lie on the Cytoplasmic side of the membrane. T766 is subject to Phosphothreonine. Y772 bears the Phosphotyrosine mark. An LIR motif is present at residues 776–782 (TSTFTNI). T778 carries the post-translational modification Phosphothreonine. Position 784 is a phosphotyrosine (Y784).

The protein belongs to the integrin beta chain family. In terms of assembly, heterodimer of an alpha and a beta subunit. Beta-3 (ITGB3) associates with either alpha-IIB (ITGA2B) or alpha-V (ITGAV). Interacts with FLNB and COMP. Interacts with PDIA6 following platelet stimulation. Interacts with SYK; upon activation by ITGB3 promotes platelet adhesion. Interacts with MYO10. Interacts with DAB2. Interacts with FERMT2. Integrin ITGAV:ITGB3 interacts with FBLN5 (via N-terminus). Interacts with EMP2; regulates the levels of the heterodimer ITGA5:ITGB3 integrin expression on the plasma membrane. ITGAV:ITGB3 interacts with CCN3. ITGAV:ITGB3 and ITGA2B:ITGB3 interact with SELP (via C-type lectin domain); the interaction mediates cell-cell interaction and adhesion. ITGAV:ITGB3 interacts with AGRA2. ITGAV:ITGB3 is found in a ternary complex with CX3CR1 and CX3CL1. ITGAV:ITGB3 is found in a ternary complex with NRG1 and ERBB3. ITGAV:ITGB3 is found in a ternary complex with FGF1 and FGFR1. ITGAV:ITGB3 interacts with FGF2; it is likely that FGF2 can simultaneously bind ITGAV:ITGB3 and FGF receptors. ITGAV:ITGB3 binds to IL1B. ITGAV:ITGB3 is found in a ternary complex with IGF1 and IGF1R. ITGAV:ITGB3 interacts with IGF2. ITGAV:ITGB3 interacts with FBN1. ITGAV:ITGB3 interacts with CD9, CD81 and CD151 (via second extracellular domain). Interacts (via the allosteric site (site 2)) with CXCL12 in a CXCR4-independent manner. Interacts with MXRA8/DICAM; the interaction inhibits ITGAV:ITGB3 heterodimer formation. ITGAV:ITGB3 interacts with PTN. Forms a complex with PTPRZ1 and PTN that stimulates endothelial cell migration through ITGB3 Tyr-772 phosphorylation. ITGAV:ITGB3 interacts with SLC6A4. Interacts with SLC6A4 (via C-terminus); this interaction regulates SLC6A4 trafficking. ITGA2B:ITGB3 interacts with PPIA/CYPA; the interaction is ROS and PPIase activity-dependent and is increased in the presence of thrombin. Interacts with tensin TNS3; TNS3 also interacts with PEAK1, thus acting as an adapter molecule to bridge the association of PEAK1 with ITGB3. Interacts with TM4SF19. Post-translationally, phosphorylated on tyrosine residues in response to thrombin-induced platelet aggregation. Probably involved in outside-in signaling.

Its subcellular location is the cell membrane. It is found in the cell projection. The protein resides in the lamellipodium membrane. The protein localises to the cell junction. It localises to the focal adhesion. Its subcellular location is the postsynaptic cell membrane. It is found in the synapse. In terms of biological role, integrin alpha-V/beta-3 (ITGAV:ITGB3) is a receptor for cytotactin, fibronectin, laminin, matrix metalloproteinase-2, osteopontin, osteomodulin, prothrombin, thrombospondin, vitronectin and von Willebrand factor. Integrin alpha-IIB/beta-3 (ITGA2B:ITGB3) is a receptor for fibronectin, fibrinogen, plasminogen, prothrombin, thrombospondin and vitronectin. Integrins alpha-IIB/beta-3 and alpha-V/beta-3 recognize the sequence R-G-D in a wide array of ligands. Integrin alpha-IIB/beta-3 recognizes the sequence H-H-L-G-G-G-A-K-Q-A-G-D-V in fibrinogen gamma chain. Following activation integrin alpha-IIB/beta-3 brings about platelet/platelet interaction through binding of soluble fibrinogen. This step leads to rapid platelet aggregation which physically plugs ruptured endothelial surfaces. Fibrinogen binding enhances SELP expression in activated platelets. ITGAV:ITGB3 binds to fractalkine (CX3CL1) and acts as its coreceptor in CX3CR1-dependent fractalkine signaling. ITGAV:ITGB3 binds to NRG1 (via EGF domain) and this binding is essential for NRG1-ERBB signaling. ITGAV:ITGB3 binds to FGF1 and this binding is essential for FGF1 signaling. ITGAV:ITGB3 binds to FGF2 and this binding is essential for FGF2 signaling. ITGAV:ITGB3 binds to IGF1 and this binding is essential for IGF1 signaling. ITGAV:ITGB3 binds to IGF2 and this binding is essential for IGF2 signaling. ITGAV:ITGB3 binds to IL1B and this binding is essential for IL1B signaling. ITGAV:ITGB3 binds to PLA2G2A via a site (site 2) which is distinct from the classical ligand-binding site (site 1) and this induces integrin conformational changes and enhanced ligand binding to site 1. ITGAV:ITGB3 acts as a receptor for fibrillin-1 (FBN1) and mediates R-G-D-dependent cell adhesion to FBN1. In brain, plays a role in synaptic transmission and plasticity. Involved in the regulation of the serotonin neurotransmission, is required to localize to specific compartments within the synapse the serotonin receptor SLC6A4 and for an appropriate reuptake of serotonin. Controls excitatory synaptic strength by regulating GRIA2-containing AMPAR endocytosis, which affects AMPAR abundance and composition. ITGAV:ITGB3 acts as a receptor for CD40LG. ITGAV:ITGB3 acts as a receptor for IBSP and promotes cell adhesion and migration to IBSP. This chain is Integrin beta-3, found in Rattus norvegicus (Rat).